Reading from the N-terminus, the 471-residue chain is Light-independent protochlorophyllide reductase subunit N (471 aa).

3 residues coordinate [4Fe-4S] cluster: C22, C47, and C107.

This sequence belongs to the BchN/ChlN family. In terms of assembly, protochlorophyllide reductase is composed of three subunits; ChlL, ChlN and ChlB. Forms a heterotetramer of two ChlB and two ChlN subunits. [4Fe-4S] cluster is required as a cofactor.

The protein localises to the plastid. It localises to the chloroplast. It carries out the reaction chlorophyllide a + oxidized 2[4Fe-4S]-[ferredoxin] + 2 ADP + 2 phosphate = protochlorophyllide a + reduced 2[4Fe-4S]-[ferredoxin] + 2 ATP + 2 H2O. It functions in the pathway porphyrin-containing compound metabolism; chlorophyll biosynthesis (light-independent). In terms of biological role, component of the dark-operative protochlorophyllide reductase (DPOR) that uses Mg-ATP and reduced ferredoxin to reduce ring D of protochlorophyllide (Pchlide) to form chlorophyllide a (Chlide). This reaction is light-independent. The NB-protein (ChlN-ChlB) is the catalytic component of the complex. The chain is Light-independent protochlorophyllide reductase subunit N from Anthoceros angustus (Hornwort).